Reading from the N-terminus, the 85-residue chain is Putative membrane protein insertion efficiency factor (85 aa).

The protein belongs to the UPF0161 family.

It is found in the cell inner membrane. In terms of biological role, could be involved in insertion of integral membrane proteins into the membrane. The chain is Putative membrane protein insertion efficiency factor from Serratia proteamaculans (strain 568).